Here is a 373-residue protein sequence, read N- to C-terminus: Probable G-protein coupled receptor 45 (373 aa).

The Extracellular segment spans residues 1–38 (MACNSTPMGTYEHLLLNVSNTLDPGDTPLSAPLRISLA). Asn-17 is a glycosylation site (N-linked (GlcNAc...) asparagine). Residues 39 to 59 (IMMLLMIVVGFLGNTVVCIIV) traverse the membrane as a helical segment. At 60–75 (YQRPAMRSAINLLLAT) the chain is on the cytoplasmic side. The chain crosses the membrane as a helical span at residues 76 to 96 (LAFSDIMLSLCCMPFTAITLI). At 97-109 (TVRWHFGDHFCRL) the chain is on the extracellular side. Residues 110–130 (SATLYWFFVLEGVAILLIISV) traverse the membrane as a helical segment. Residues 131–149 (DRFLIIVQRQDKLNPRRAK) lie on the Cytoplasmic side of the membrane. The helical transmembrane segment at 150–170 (MIIAASWVLSFCISAPSFTGW) threads the bilayer. Over 171–198 (TFMEVPARAPQCVLGYTEFPAERAYVVT) the chain is Extracellular. A helical transmembrane segment spans residues 199–219 (LVVAVFFAPFGVMLCSYLCIL). The Cytoplasmic portion of the chain corresponds to 220 to 269 (NTVRKNAVRVHNQSDSLDLRQLTGAGLRRLRRQQQQASLDLSFKTKAFTT). A helical transmembrane segment spans residues 270–290 (ILILFVGFSLCWLPHSVYSLL). Over 291 to 306 (SAFSRRFYYSASFYTT) the chain is Extracellular. A helical membrane pass occupies residues 307 to 327 (STCVLWLSYLKSVFNPIVYCW). Over 328 to 373 (RIKKFREACIELLPHTFQILPKVPERIQRKIQPSTIYVCNENQSAV) the chain is Cytoplasmic.

Belongs to the G-protein coupled receptor 1 family. As to expression, brain specific.

The protein resides in the cell membrane. Functionally, orphan receptor. May play a role in brain function. The sequence is that of Probable G-protein coupled receptor 45 (Gpr45) from Mus musculus (Mouse).